The chain runs to 408 residues: Dual-specificity RNA methyltransferase RlmN (408 aa).

Catalysis depends on Glu-126, which acts as the Proton acceptor. The Radical SAM core domain occupies Glu-132–Arg-373. Cys-139 and Cys-384 are disulfide-bonded. [4Fe-4S] cluster contacts are provided by Cys-146, Cys-150, and Cys-153. S-adenosyl-L-methionine is bound by residues Gly-210 to Glu-211, Ser-242, Ser-264 to His-266, and Asn-341. The active-site S-methylcysteine intermediate is Cys-384.

Belongs to the radical SAM superfamily. RlmN family. [4Fe-4S] cluster is required as a cofactor.

It localises to the cytoplasm. The enzyme catalyses adenosine(2503) in 23S rRNA + 2 reduced [2Fe-2S]-[ferredoxin] + 2 S-adenosyl-L-methionine = 2-methyladenosine(2503) in 23S rRNA + 5'-deoxyadenosine + L-methionine + 2 oxidized [2Fe-2S]-[ferredoxin] + S-adenosyl-L-homocysteine. The catalysed reaction is adenosine(37) in tRNA + 2 reduced [2Fe-2S]-[ferredoxin] + 2 S-adenosyl-L-methionine = 2-methyladenosine(37) in tRNA + 5'-deoxyadenosine + L-methionine + 2 oxidized [2Fe-2S]-[ferredoxin] + S-adenosyl-L-homocysteine. Specifically methylates position 2 of adenine 2503 in 23S rRNA and position 2 of adenine 37 in tRNAs. m2A2503 modification seems to play a crucial role in the proofreading step occurring at the peptidyl transferase center and thus would serve to optimize ribosomal fidelity. In Bartonella henselae (strain ATCC 49882 / DSM 28221 / CCUG 30454 / Houston 1) (Rochalimaea henselae), this protein is Dual-specificity RNA methyltransferase RlmN.